Here is a 421-residue protein sequence, read N- to C-terminus: Gamma-glutamyl phosphate reductase (421 aa).

This sequence belongs to the gamma-glutamyl phosphate reductase family.

The protein resides in the cytoplasm. It catalyses the reaction L-glutamate 5-semialdehyde + phosphate + NADP(+) = L-glutamyl 5-phosphate + NADPH + H(+). The protein operates within amino-acid biosynthesis; L-proline biosynthesis; L-glutamate 5-semialdehyde from L-glutamate: step 2/2. Catalyzes the NADPH-dependent reduction of L-glutamate 5-phosphate into L-glutamate 5-semialdehyde and phosphate. The product spontaneously undergoes cyclization to form 1-pyrroline-5-carboxylate. This chain is Gamma-glutamyl phosphate reductase, found in Brucella melitensis biotype 1 (strain ATCC 23456 / CCUG 17765 / NCTC 10094 / 16M).